We begin with the raw amino-acid sequence, 89 residues long: Putative regulatory protein RBAM_015500 (89 aa).

This sequence belongs to the RemA family.

The sequence is that of Putative regulatory protein RBAM_015500 from Bacillus velezensis (strain DSM 23117 / BGSC 10A6 / LMG 26770 / FZB42) (Bacillus amyloliquefaciens subsp. plantarum).